The following is a 386-amino-acid chain: Galactokinase (386 aa).

35-38 lines the substrate pocket; sequence EHTD. 125 to 131 lines the ATP pocket; the sequence is GAGLSSS. Positions 131 and 163 each coordinate Mg(2+). Catalysis depends on aspartate 175, which acts as the Proton acceptor. Tyrosine 224 is a binding site for substrate.

The protein belongs to the GHMP kinase family. GalK subfamily.

It localises to the cytoplasm. It catalyses the reaction alpha-D-galactose + ATP = alpha-D-galactose 1-phosphate + ADP + H(+). The protein operates within carbohydrate metabolism; galactose metabolism. Its function is as follows. Catalyzes the transfer of the gamma-phosphate of ATP to D-galactose to form alpha-D-galactose-1-phosphate (Gal-1-P). The polypeptide is Galactokinase (Vibrio cholerae serotype O1 (strain ATCC 39315 / El Tor Inaba N16961)).